Reading from the N-terminus, the 111-residue chain is Putative lipid-binding protein AIR1 (111 aa).

The N-terminal stretch at 1–23 is a signal peptide; the sequence is MAPRTPLALFVSLNLLFFTYTSA. Cystine bridges form between cysteine 28–cysteine 58, cysteine 38–cysteine 57, and cysteine 74–cysteine 110.

Belongs to the plant LTP family. PEARLI1 subfamily.

It localises to the secreted. The chain is Putative lipid-binding protein AIR1 (AIR1) from Arabidopsis thaliana (Mouse-ear cress).